The following is a 244-amino-acid chain: Ubiquinone biosynthesis O-methyltransferase (244 aa).

Residues arginine 36, glycine 60, aspartate 81, and leucine 123 each coordinate S-adenosyl-L-methionine.

Belongs to the methyltransferase superfamily. UbiG/COQ3 family.

The enzyme catalyses a 3-demethylubiquinol + S-adenosyl-L-methionine = a ubiquinol + S-adenosyl-L-homocysteine + H(+). The catalysed reaction is a 3-(all-trans-polyprenyl)benzene-1,2-diol + S-adenosyl-L-methionine = a 2-methoxy-6-(all-trans-polyprenyl)phenol + S-adenosyl-L-homocysteine + H(+). It participates in cofactor biosynthesis; ubiquinone biosynthesis. In terms of biological role, O-methyltransferase that catalyzes the 2 O-methylation steps in the ubiquinone biosynthetic pathway. The chain is Ubiquinone biosynthesis O-methyltransferase from Rickettsia felis (strain ATCC VR-1525 / URRWXCal2) (Rickettsia azadi).